The chain runs to 295 residues: Non-selective voltage-gated ion channel VDAC2 (295 aa).

Residues lysine 24 and lysine 32 each contribute to the ATP site. Lysine 32 carries the post-translational modification N6-acetyllysine; alternate. Position 32 is an N6-succinyllysine; alternate (lysine 32). A Glycyl lysine isopeptide (Lys-Gly) (interchain with G-Cter in ubiquitin); alternate cross-link involves residue lysine 32. Transmembrane regions (beta stranded) follow at residues 38-47 and 51-59; these read LVKLDVKTKS and VEFSTSGSS. Residue lysine 65 forms a Glycyl lysine isopeptide (Lys-Gly) (interchain with G-Cter in ubiquitin) linkage. The beta stranded transmembrane segment at 66–76 threads the bilayer; the sequence is VSGTLETKYKW. Tyrosine 79 carries the phosphotyrosine modification. 3 beta stranded membrane passes run 81-88, 92-101, and 107-116; these read LTFTEKWN, TLGTEIAIED, and LKLTFDTTFS. Threonine 119 carries the phosphothreonine modification. Lysine 121 bears the N6-acetyllysine; alternate mark. A Glycyl lysine isopeptide (Lys-Gly) (interchain with G-Cter in ubiquitin); alternate cross-link involves residue lysine 121. Lysine 122 participates in a covalent cross-link: Glycyl lysine isopeptide (Lys-Gly) (interchain with G-Cter in ubiquitin). 4 beta stranded membrane-spanning segments follow: residues 123–132, 135–142, 149–157, and 162–170; these read SGKIKSAYKR, INLGCDVD, AIHGSAVFG, and LAGYQMTFD. Residue lysine 173 forms a Glycyl lysine isopeptide (Lys-Gly) (interchain with G-Cter in ubiquitin) linkage. 6 consecutive transmembrane segments (beta stranded) span residues 175–187, 190–197, 201–210, 214–223, 230–239, and 243–250; these read KLTR…GYRT, FQLHTNVN, EFGGSIYQKV, FDTSVNLAWT, RFGIAAKYQL, and ASISAKVN. The residue at position 237 (tyrosine 237) is a Phosphotyrosine. Serine 252 is modified (phosphoserine). NAD(+)-binding positions include 254 to 256 and 272 to 276; these read LIG and SALVD. A run of 2 beta stranded transmembrane segments spans residues 254-263 and 266-275; these read LIGVGYTQTL and GVKLTLSALV. Lysine 278 is subject to N6-acetyllysine; alternate. Residue lysine 278 forms a Glycyl lysine isopeptide (Lys-Gly) (interchain with G-Cter in ubiquitin); alternate linkage. The chain crosses the membrane as a beta stranded span at residues 285–294; the sequence is HKLGLALELE.

This sequence belongs to the eukaryotic mitochondrial porin family. In terms of assembly, monomer, homodimer and higher order oligomers; formation of higher order structures is necessary for scramblase activity. Interacts with ARMC12 in a TBC1D21-dependent manner. Interacts with KLC3. Interacts with SPATA33. Interacts with PPP3CC in a SPATA33-dependent manner. Ubiquitinated by PRKN during mitophagy, leading to its degradation and enhancement of mitophagy. Deubiquitinated by USP30. As to expression, highly expressed in heart, kidney, brain and ascitic tumor with very low levels in liver. Expressed in the head region of epididymal sperm.

It is found in the mitochondrion outer membrane. The protein resides in the membrane. It catalyses the reaction chloride(in) = chloride(out). It carries out the reaction K(+)(in) = K(+)(out). The catalysed reaction is a 1,2-diacyl-sn-glycero-3-phospho-L-serine(in) = a 1,2-diacyl-sn-glycero-3-phospho-L-serine(out). The enzyme catalyses a 1,2-diacyl-sn-glycero-3-phosphocholine(in) = a 1,2-diacyl-sn-glycero-3-phosphocholine(out). It catalyses the reaction a 1,2-diacyl-sn-glycero-3-phospho-(1D-myo-inositol)(in) = a 1,2-diacyl-sn-glycero-3-phospho-(1D-myo-inositol)(out). Its function is as follows. Non-selective voltage-gated ion channel that mediates the transport of anions and cations through the mitochondrion outer membrane and plasma membrane. The channel adopts an open conformation at zero mV and a closed conformation at both positive and negative potentials. There are two populations of channels; the main that functions in a lower open-state conductance with lower ion selectivity, that switch, in a voltage-dependent manner, from the open to a low-conducting 'closed' state and the other that has a normal ion selectivity in the typical high conductance, 'open' state. Binds various lipids, including the sphingolipid ceramide, the phospholipid phosphatidylcholine, and the sterols cholesterol and oxysterol. Binding of ceramide promotes the mitochondrial outer membrane permeabilization (MOMP) apoptotic pathway. Catalyzes the scrambling of phospholipids across the outer mitochondrial membrane; the mechanism is unrelated to channel activity and is capable of translocating both anionic and zwitterionic phospholipids. This Rattus norvegicus (Rat) protein is Non-selective voltage-gated ion channel VDAC2.